The following is a 277-amino-acid chain: Basic leucine zipper transcriptional factor ATF-like 2 (277 aa).

Disordered stretches follow at residues 15-50, 126-146, and 191-256; these read LGES…HQQH, FQTP…CSHE, and SFSK…QKSS. Positions 18 to 81 constitute a bZIP domain; that stretch reads SQKQLKKKQK…AGWGRTLHLH (64 aa). The tract at residues 20-42 is basic motif; sequence KQLKKKQKNRVAAQRSRQKHTSK. Over residues 41–50 the composition is skewed to basic and acidic residues; that stretch reads SKADALHQQH. The leucine-zipper stretch occupies residues 46-67; that stretch reads LHQQHESLEKQNHALRKEIQAL. Composition is skewed to polar residues over residues 213 to 227 and 247 to 256; these read RQEQ…SSDS and GSSTHWQKSS.

The protein belongs to the bZIP family. Heterodimer; heterodimerizes with JUN family proteins.

It is found in the nucleus. Functionally, AP-1 family transcription factor that controls the differentiation of lineage-specific cells in the immune system. Selectively suppresses CCN1 transcription and hence blocks the downstream cell proliferation signals produced by CCN1 and inhibits CCN1-induced anchorage-independent growth and invasion in several cancer types. Possibly acts by interfering with AP-1 binding to CCN1 promoter. Following infection, participates in the differentiation of CD8(+) thymic conventional dendritic cells in the immune system. Acts via the formation of a heterodimer with JUN family proteins that recognizes and binds DNA sequence 5'-TGA[CG]TCA-3' and regulates expression of target genes. The chain is Basic leucine zipper transcriptional factor ATF-like 2 (Batf2) from Mus musculus (Mouse).